Consider the following 156-residue polypeptide: Putative pre-16S rRNA nuclease (156 aa).

It belongs to the YqgF nuclease family.

It localises to the cytoplasm. Its function is as follows. Could be a nuclease involved in processing of the 5'-end of pre-16S rRNA. The sequence is that of Putative pre-16S rRNA nuclease from Caulobacter vibrioides (strain ATCC 19089 / CIP 103742 / CB 15) (Caulobacter crescentus).